A 901-amino-acid chain; its full sequence is Probable inorganic carbon transporter subunit DabA (901 aa).

Cysteine 424, aspartate 426, histidine 606, and cysteine 621 together coordinate Zn(2+).

Belongs to the inorganic carbon transporter (TC 9.A.2) DabA family. As to quaternary structure, forms a complex with DabB. Requires Zn(2+) as cofactor.

The protein localises to the cell membrane. Part of an energy-coupled inorganic carbon pump. This chain is Probable inorganic carbon transporter subunit DabA, found in Staphylococcus aureus (strain bovine RF122 / ET3-1).